Here is a 134-residue protein sequence, read N- to C-terminus: Large ribosomal subunit protein bL20 (134 aa).

The protein belongs to the bacterial ribosomal protein bL20 family.

Functionally, binds directly to 23S ribosomal RNA and is necessary for the in vitro assembly process of the 50S ribosomal subunit. It is not involved in the protein synthesizing functions of that subunit. The chain is Large ribosomal subunit protein bL20 from Sinorhizobium medicae (strain WSM419) (Ensifer medicae).